Consider the following 211-residue polypeptide: MGSIGNGRSDSVVGIQMPPAGSKMVLEPEALQVTTSPVPRWPRLGVVMVATRAVAMVMALLSMSLMVSSKQRGILTIFGIEIPLDANWSFSYSLQFLVAMSTASAAYSLAQLLLIAHKAVKKSPIVPSRRHAWLLFAGDQVFSLAMMSAGSAAAAVANLNRTGIRHTALPNFCKPLPRFCDLSAVSIACAFLSCVFLAASAVIDVIWLSSP.

Residues 1–45 lie on the Cytoplasmic side of the membrane; sequence MGSIGNGRSDSVVGIQMPPAGSKMVLEPEALQVTTSPVPRWPRLG. The helical transmembrane segment at 46–66 threads the bilayer; the sequence is VVMVATRAVAMVMALLSMSLM. At 67 to 95 the chain is on the extracellular side; it reads VSSKQRGILTIFGIEIPLDANWSFSYSLQ. Asparagine 87 is a glycosylation site (N-linked (GlcNAc...) asparagine). A helical transmembrane segment spans residues 96 to 116; the sequence is FLVAMSTASAAYSLAQLLLIA. Residues 117–131 lie on the Cytoplasmic side of the membrane; sequence HKAVKKSPIVPSRRH. The helical transmembrane segment at 132–152 threads the bilayer; sequence AWLLFAGDQVFSLAMMSAGSA. Residues 153–186 are Extracellular-facing; the sequence is AAAVANLNRTGIRHTALPNFCKPLPRFCDLSAVS. Residue asparagine 160 is glycosylated (N-linked (GlcNAc...) asparagine). A helical transmembrane segment spans residues 187–207; that stretch reads IACAFLSCVFLAASAVIDVIW. The Cytoplasmic portion of the chain corresponds to 208 to 211; that stretch reads LSSP.

This sequence belongs to the Casparian strip membrane proteins (CASP) family. In terms of assembly, homodimer and heterodimers.

It is found in the cell membrane. This Sorghum bicolor (Sorghum) protein is CASP-like protein 3A1.